The chain runs to 179 residues: Large ribosomal subunit protein bL17 (179 aa).

The span at 123–161 (KEKDTKKKDDSKKSDDKKTSKKEAGFKSSKGESEHKKNT) shows a compositional bias: basic and acidic residues. Residues 123-179 (KEKDTKKKDDSKKSDDKKTSKKEAGFKSSKGESEHKKNTDQVVDSSSNRRYNRVKGS) are disordered. Residues 162 to 171 (DQVVDSSSNR) show a composition bias toward polar residues.

This sequence belongs to the bacterial ribosomal protein bL17 family. As to quaternary structure, part of the 50S ribosomal subunit. Contacts protein L32.

The sequence is that of Large ribosomal subunit protein bL17 from Treponema denticola (strain ATCC 35405 / DSM 14222 / CIP 103919 / JCM 8153 / KCTC 15104).